A 188-amino-acid chain; its full sequence is MIFKDYDFLQNYDLKNFEEKVKIYKELLSKFNRIHNLTHLKNIDENIFDSIKILDFYDFSKAKNIADIGSGAGFPAVFLAFLLQGNFHLFEPNPKKAAFLRTLKIECELSNLHIYKEKVQEYQNIFKADIITSRALMDVKPLLEICKNLKDENTVFILWKGSEIYQELENIKDYEIFENNLRKYCILK.

S-adenosyl-L-methionine-binding positions include Gly69, Phe74, 119–120, and Arg134; that span reads VQ.

This sequence belongs to the methyltransferase superfamily. RNA methyltransferase RsmG family.

Its subcellular location is the cytoplasm. The catalysed reaction is guanosine(527) in 16S rRNA + S-adenosyl-L-methionine = N(7)-methylguanosine(527) in 16S rRNA + S-adenosyl-L-homocysteine. Specifically methylates the N7 position of guanine in position 527 of 16S rRNA. In Campylobacter jejuni (strain RM1221), this protein is Ribosomal RNA small subunit methyltransferase G.